The chain runs to 366 residues: Homeobox-leucine zipper protein HOX21 (366 aa).

Disordered stretches follow at residues 25–81 (QQAA…SSAQ) and 94–132 (MLGK…EKKR). Residues 36-48 (HHHHHHHGHHGHH) are compositionally biased toward basic residues. Pro residues predominate over residues 62-74 (GPPPPPPPHPHNP). A compositionally biased stretch (gly residues) spans 103–115 (GDGGGGGDEVNGG). Residues 127–186 (AGEKKRRLNVEQVRTLEKNFELGNKLEPERKMQLARALGLQPRQVAIWFQNRRARWKTKQ) constitute a DNA-binding region (homeobox). The tract at residues 185 to 229 (KQLEKDYDALKRQLDAVKAENDALLNHNKKLQAEIVALKGREAAS) is leucine-zipper. Disordered stretches follow at residues 239-287 (EASC…GGGG) and 312-336 (LHSS…VQAA). Residues 240–252 (ASCSNRSENSSEI) show a composition bias toward polar residues.

It belongs to the HD-ZIP homeobox family. Class I subfamily. In terms of tissue distribution, expressed in seedlings, roots, stems, leaf blades and panicles.

It is found in the nucleus. Functionally, probable transcription factor. In Oryza sativa subsp. japonica (Rice), this protein is Homeobox-leucine zipper protein HOX21 (HOX21).